The primary structure comprises 352 residues: [LysW]-L-2-aminoadipate/[LysW]-L-glutamate phosphate reductase (352 aa).

13 to 16 (SGYT) contributes to the NADP(+) binding site. Cys-153 is a catalytic residue. Residue Asn-319 coordinates NADP(+).

The protein belongs to the NAGSA dehydrogenase family. Type 1 subfamily. LysY sub-subfamily.

It localises to the cytoplasm. The catalysed reaction is [amino-group carrier protein]-C-terminal-N-(1-carboxy-5-oxopentan-1-yl)-L-glutamine + phosphate + NADP(+) = [amino-group carrier protein]-C-terminal-N-(1-carboxy-5-phosphooxy-5-oxopentan-1-yl)-L-glutamine + NADPH + H(+). The enzyme catalyses [amino-group carrier protein]-C-terminal-gamma-(L-glutamyl-5-semialdehyde)-L-glutamate + phosphate + NADP(+) = [amino-group carrier protein]-C-terminal-gamma-(5-phospho-L-glutamyl)-L-glutamate + NADPH + H(+). It participates in amino-acid biosynthesis; L-lysine biosynthesis via AAA pathway; L-lysine from L-alpha-aminoadipate (Thermus route): step 3/5. It functions in the pathway amino-acid biosynthesis; L-arginine biosynthesis. Functionally, involved in both the arginine and lysine biosynthetic pathways. This Saccharolobus solfataricus (strain ATCC 35092 / DSM 1617 / JCM 11322 / P2) (Sulfolobus solfataricus) protein is [LysW]-L-2-aminoadipate/[LysW]-L-glutamate phosphate reductase.